Here is a 262-residue protein sequence, read N- to C-terminus: Type III pantothenate kinase (262 aa).

Asp-9 to Lys-16 provides a ligand contact to ATP. Residues Tyr-96 and Gly-103–Arg-106 contribute to the substrate site. Asp-105 (proton acceptor) is an active-site residue. Thr-129 provides a ligand contact to ATP. Thr-189 serves as a coordination point for substrate.

This sequence belongs to the type III pantothenate kinase family. In terms of assembly, homodimer. Requires NH4(+) as cofactor. It depends on K(+) as a cofactor.

It localises to the cytoplasm. The enzyme catalyses (R)-pantothenate + ATP = (R)-4'-phosphopantothenate + ADP + H(+). It participates in cofactor biosynthesis; coenzyme A biosynthesis; CoA from (R)-pantothenate: step 1/5. In terms of biological role, catalyzes the phosphorylation of pantothenate (Pan), the first step in CoA biosynthesis. The chain is Type III pantothenate kinase from Burkholderia ambifaria (strain MC40-6).